A 94-amino-acid polypeptide reads, in one-letter code: Integration host factor subunit beta (94 aa).

This sequence belongs to the bacterial histone-like protein family. As to quaternary structure, heterodimer of an alpha and a beta chain.

Its function is as follows. This protein is one of the two subunits of integration host factor, a specific DNA-binding protein that functions in genetic recombination as well as in transcriptional and translational control. This chain is Integration host factor subunit beta, found in Haemophilus influenzae (strain PittGG).